Reading from the N-terminus, the 157-residue chain is Protein MG115 (157 aa).

The protein belongs to the CinA family.

This chain is Protein MG115, found in Mycoplasma genitalium (strain ATCC 33530 / DSM 19775 / NCTC 10195 / G37) (Mycoplasmoides genitalium).